A 354-amino-acid chain; its full sequence is Transcription factor ATOH1 (354 aa).

The span at 1 to 21 shows a compositional bias: basic and acidic residues; that stretch reads MSRLLHAEEWAEVKELGDHHR. Disordered regions lie at residues 1 to 55 and 91 to 122; these read MSRL…ELSL and EAAAPRDEVDGRGELVRRSSGGASSSKSPGPV. The span at 26–38 shows a compositional bias: pro residues; that stretch reads HHLPQPPPPPQPP. The segment covering 94–107 has biased composition (basic and acidic residues); it reads APRDEVDGRGELVR. Positions 108 to 122 are enriched in low complexity; sequence RSSGGASSSKSPGPV. Positions 159–211 constitute a bHLH domain; sequence QRRLAANARERRRMHGLNHAFDQLRNVIPSFNNDKKLSKYETLQMAQIYINAL. Disordered stretches follow at residues 216–277 and 312–354; these read QTPS…TRFS and SPSL…DEAS. The span at 250-264 shows a compositional bias: low complexity; sequence NATAAGAQQASGGSQ. Residues 335–354 show a composition bias toward basic and acidic residues; sequence HRSDGEFSPHSHYSDSDEAS.

In terms of assembly, efficient DNA binding requires dimerization with another bHLH protein.

It localises to the nucleus. Its function is as follows. Transcriptional regulator. Activates E box-dependent transcription in collaboration with TCF3/E47, but the activity is completely antagonized by the negative regulator of neurogenesis HES1. Plays a role in the differentiation of subsets of neural cells by activating E box-dependent transcription. This chain is Transcription factor ATOH1, found in Homo sapiens (Human).